A 162-amino-acid polypeptide reads, in one-letter code: MNPAISVALLLSVLQVSRGQKVTSLTACLVNQNLRLDCRHENNTKDNSIQHEFSLTREKRKHVLSGTLGIPEHTYRSRVTLSNQPYIKVLTLANFTTKDEGDYFCELQVSGANPMSSNKSISVYRDKLVKCGGISLLVQNTSWMLLLLLSLSLLQALDFISL.

Residues 1-19 (MNPAISVALLLSVLQVSRG) form the signal peptide. Residue Q20 is modified to Pyrrolidone carboxylic acid. One can recognise an Ig-like V-type domain in the interval 20 to 127 (QKVTSLTACL…NKSISVYRDK (108 aa)). Disulfide bonds link C28–C131 and C38–C105. N42, N94, and N118 each carry an N-linked (GlcNAc...) asparagine glycan. Residue C131 is the site of GPI-anchor amidated cysteine; alternate attachment. Residues 132–162 (GGISLLVQNTSWMLLLLLSLSLLQALDFISL) constitute a propeptide, removed in mature form.

The protein resides in the cell membrane. In terms of biological role, may play a role in cell-cell or cell-ligand interactions during synaptogenesis and other events in the brain. The sequence is that of Thy-1 membrane glycoprotein (Thy1) from Mus musculus (Mouse).